We begin with the raw amino-acid sequence, 223 residues long: Cytidylate kinase (223 aa).

An ATP-binding site is contributed by 12–20 (GPSGVGKGT).

Belongs to the cytidylate kinase family. Type 1 subfamily.

The protein resides in the cytoplasm. It carries out the reaction CMP + ATP = CDP + ADP. The catalysed reaction is dCMP + ATP = dCDP + ADP. The protein is Cytidylate kinase of Xylella fastidiosa (strain M23).